We begin with the raw amino-acid sequence, 595 residues long: Estrogen receptor (595 aa).

The interval 1-184 (MTMTLHTKAS…AMESAKETRY (184 aa)) is modulating (transactivation AF-1); mediates interaction with MACROD1. O-linked (GlcNAc) serine glycosylation is present at Ser-10. The interval 35–47 (LERPLGEVYVDGS) is required for interaction with NCOA1. The interval 35–174 (LERPLGEVYV…LASTGDKGSM (140 aa)) is interaction with DDX5; self-association. Phosphoserine; by CDK2 occurs at positions 104 and 106. Ser-118 carries the phosphoserine modification. The tract at residues 149 to 173 (FYRPTSDNRRQSGRERLASTGDKGS) is disordered. The span at 154-165 (SDNRRQSGRERL) shows a compositional bias: basic and acidic residues. Position 167 is a phosphoserine; by CK2 (Ser-167). 2 NR C4-type zinc fingers span residues 185 to 205 (CAVC…CEGC) and 221 to 245 (CPAT…LRKC). The nuclear receptor DNA-binding region spans 185–250 (CAVCNDYASG…RLRKCYEVGM (66 aa)). The mediates interaction with DNTTIP2 stretch occupies residues 185–310 (CAVCNDYASG…TKKNSPALSL (126 aa)). A hinge region spans residues 251 to 310 (MKGGIRKDRRGGRMLKHKRQRDEGEGRNEVGSSGDVRASNLWPSPLLIKHTKKNSPALSL). The span at 257-269 (KDRRGGRMLKHKR) shows a compositional bias: basic residues. The segment at 257–287 (KDRRGGRMLKHKRQRDEGEGRNEVGSSGDVR) is disordered. Arg-260 is subject to Asymmetric dimethylarginine; by PRMT1. Positions 262-595 (GRMLKHKRQR…EEAGAFPTTV (334 aa)) are interaction with AKAP13. A self-association region spans residues 264 to 595 (MLKHKRQRDE…EEAGAFPTTV (332 aa)). One can recognise an NR LBD domain in the interval 311–547 (TADQMVSALL…DLLLEMLDAH (237 aa)). The interval 311-595 (TADQMVSALL…EEAGAFPTTV (285 aa)) is transactivation AF-2. 17beta-estradiol is bound by residues Glu-353 and Arg-394. Cys-447 is lipidated: S-palmitoyl cysteine. Residue His-524 participates in 17beta-estradiol binding. Tyr-537 bears the Phosphotyrosine; by Tyr-kinases mark. A glycan (O-linked (GlcNAc) threonine) is linked at Thr-571.

It belongs to the nuclear hormone receptor family. NR3 subfamily. In terms of assembly, binds DNA as a homodimer. Can form a heterodimer with ESR2. Interacts with coactivator NCOA5. Interacts with PELP1, the interaction is enhanced by 17-beta-estradiol; the interaction increases ESR1 transcriptional activity. Interacts with NCOA7; the interaction is ligand-inducible. Interacts with AKAP13, CUEDC2, HEXIM1, KDM5A, MAP1S, SMARD1, and UBE1C. Interacts with MUC1; the interaction is stimulated by 7 beta-estradiol (E2) and enhances ESR1-mediated transcription. Interacts with DNTTIP2, and UIMC1. Interacts with KMT2D/MLL2. Interacts with ATAD2; the interaction is enhanced by estradiol. Interacts with KIF18A and LDB1. Interacts with RLIM (via its C-terminus). Interacts with MACROD1. Interacts with SH2D4A and PLCG. Interacts with SH2D4A; the interaction blocks binding to PLCG and inhibits estrogen-induced cell proliferation. Interacts with DYNLL1. Interacts with CCDC62; the interaction requires estradiol and appears to enhance the transcription of target genes. Interacts with NR2C1; the interaction prevents homodimerization of ESR1 and suppresses its transcriptional activity and cell growth. Interacts with DNAAF4. Interacts with PRMT2. Interacts with RBFOX2. Interacts with EP300; the interaction is estrogen-dependent and enhanced by CITED1. Interacts with CITED1; the interaction is estrogen-dependent. Interacts with FAM120B, FOXL2, PHB2 and SLC30A9. Interacts with coactivators NCOA3 and NCOA6. Interacts with STK3/MST2 only in the presence of SAV1 and vice-versa. Binds to CSNK1D. Interacts with NCOA2; NCOA2 can interact with ESR1 AF-1 and AF-2 domains simultaneously and mediate their transcriptional synergy. Interacts with DDX5. Interacts with NCOA1; the interaction seems to require a self-association of N-terminal and C-terminal regions. Interacts with ZNF366, DDX17, NFKB1, RELA, SP1 and SP3. Interacts with NRIP1. Interacts with GPER1; the interaction occurs in an estrogen-dependent manner. Interacts with CLOCK and the interaction is stimulated by estrogen. Interacts with TRIP4 (ufmylated); estrogen dependent. Interacts with LMTK3; the interaction phosphorylates ESR1 (in vitro) and protects it against proteasomal degradation. Interacts with CCAR2 (via N-terminus) in a ligand-independent manner. Interacts with ZFHX3. Interacts with SFR1 in a ligand-dependent and -independent manner. Interacts with DCAF13, LATS1 and DCAF1; regulates ESR1 ubiquitination and ubiquitin-mediated proteasomal degradation. Interacts (via DNA-binding domain) with POU4F2 (C-terminus); this interaction increases the estrogen receptor ESR1 transcriptional activity in a DNA- and ligand 17-beta-estradiol-independent manner. Interacts with ESRRB isoform 1. Interacts with UBE3A and WBP2. Interacts with GTF2B. Interacts with RBM39. In the absence of hormonal ligand, interacts with TACC1. Interacts with PI3KR1 or PI3KR2 and PTK2/FAK1. Interacts with SRC. Interacts with BAG1; the interaction is promoted in the absence of estradiol (17-beta-estradiol/E2). Interacts with and ubiquitinated by STUB1; the interaction is promoted in the absence of estradiol (17-beta-estradiol/E2). Interacts with NEDD8. In terms of processing, ubiquitinated; regulated by LATS1 via DCAF1 it leads to ESR1 proteasomal degradation. Deubiquitinated by OTUB1. Ubiquitinated by STUB1/CHIP; in the CA1 hippocampal region following loss of endogenous circulating estradiol (17-beta-estradiol/E2). Ubiquitinated by UBR5, leading to its degradation: UBR5 specifically recognizes and binds ligand-bound ESR1 when it is not associated with coactivators (NCOAs). In presence of NCOAs, the UBR5-degron is not accessible, preventing its ubiquitination and degradation. Phosphorylated by cyclin A/CDK2 and CK1. Phosphorylation probably enhances transcriptional activity. Dephosphorylation at Ser-118 by PPP5C inhibits its transactivation activity. Phosphorylated by LMTK3 (in vitro). Post-translationally, palmitoylated at Cys-447 by ZDHHC7 and ZDHHC21. Palmitoylation is required for plasma membrane targeting and for rapid intracellular signaling via ERK and AKT kinases and cAMP generation, but not for signaling mediated by the nuclear hormone receptor. In terms of processing, dimethylated by PRMT1 at Arg-260. The methylation may favor cytoplasmic localization. Demethylated by JMJD6 at Arg-260.

It localises to the nucleus. The protein localises to the cytoplasm. It is found in the golgi apparatus. Its subcellular location is the cell membrane. Functionally, nuclear hormone receptor. The steroid hormones and their receptors are involved in the regulation of eukaryotic gene expression and affect cellular proliferation and differentiation in target tissues. Ligand-dependent nuclear transactivation involves either direct homodimer binding to a palindromic estrogen response element (ERE) sequence or association with other DNA-binding transcription factors, such as AP-1/c-Jun, c-Fos, ATF-2, Sp1 and Sp3, to mediate ERE-independent signaling. Ligand binding induces a conformational change allowing subsequent or combinatorial association with multiprotein coactivator complexes through LXXLL motifs of their respective components. Mutual transrepression occurs between the estrogen receptor (ER) and NF-kappa-B in a cell-type specific manner. Decreases NF-kappa-B DNA-binding activity and inhibits NF-kappa-B-mediated transcription from the IL6 promoter and displace RELA/p65 and associated coregulators from the promoter. Recruited to the NF-kappa-B response element of the CCL2 and IL8 promoters and can displace CREBBP. Present with NF-kappa-B components RELA/p65 and NFKB1/p50 on ERE sequences. Can also act synergistically with NF-kappa-B to activate transcription involving respective recruitment adjacent response elements; the function involves CREBBP. Can activate the transcriptional activity of TFF1. Also mediates membrane-initiated estrogen signaling involving various kinase cascades. Essential for MTA1-mediated transcriptional regulation of BRCA1 and BCAS3. Maintains neuronal survival in response to ischemic reperfusion injury when in the presence of circulating estradiol (17-beta-estradiol/E2). In Felis catus (Cat), this protein is Estrogen receptor (ESR1).